A 223-amino-acid chain; its full sequence is ATP-dependent dethiobiotin synthetase BioD (223 aa).

A Mg(2+)-binding site is contributed by threonine 16. Residue lysine 37 is part of the active site. Serine 41 contacts substrate. Mg(2+)-binding residues include aspartate 50 and glutamate 111. ATP contacts are provided by residues aspartate 50, 111 to 114 (EGAG), and 171 to 172 (NR).

Belongs to the dethiobiotin synthetase family. Homodimer. Mg(2+) is required as a cofactor.

The protein resides in the cytoplasm. The catalysed reaction is (7R,8S)-7,8-diammoniononanoate + CO2 + ATP = (4R,5S)-dethiobiotin + ADP + phosphate + 3 H(+). It participates in cofactor biosynthesis; biotin biosynthesis; biotin from 7,8-diaminononanoate: step 1/2. Functionally, catalyzes a mechanistically unusual reaction, the ATP-dependent insertion of CO2 between the N7 and N8 nitrogen atoms of 7,8-diaminopelargonic acid (DAPA, also called 7,8-diammoniononanoate) to form a ureido ring. The chain is ATP-dependent dethiobiotin synthetase BioD from Anaeromyxobacter sp. (strain K).